A 172-amino-acid chain; its full sequence is Chromosome-anchoring protein RacA (172 aa).

Residues 5 to 25 (TSDVAIRLGVSPKTIQRWVRK) constitute a DNA-binding region (H-T-H motif). Disordered stretches follow at residues 57–76 (AAME…RNNI) and 142–172 (QLNN…GLFA). A compositionally biased stretch (pro residues) spans 62 to 71 (PPTPKRPPTP). A coiled-coil region spans residues 83 to 146 (ESIEPEIARV…ARLEQQLNNR (64 aa)). The span at 142 to 151 (QLNNRPPSSH) shows a compositional bias: polar residues.

It belongs to the RacA family.

The protein localises to the cytoplasm. Required for the formation of axial filaments and for anchoring the origin regions at the cell poles in sporulating cells, thus ensuring proper chromosome segregation in the prespore. Binds in a dispersed manner throughout the chromosome but preferentially to sites clustered in the origin portion of the chromosome, causing condensation of the chromosome and its remodeling into an elongated, anchored structure. This is Chromosome-anchoring protein RacA from Geobacillus kaustophilus (strain HTA426).